Here is a 369-residue protein sequence, read N- to C-terminus: Mannose-1-phosphate guanylyltransferase catalytic subunit beta (369 aa).

A substrate-binding domain region spans residues 12-231; it reads RALILVGGYG…TGFWMDIGQP (220 aa). Residue D120 participates in GDP-alpha-D-mannose binding. D120 lines the Mg(2+) pocket. Residue K171 is part of the active site. D227 is a GDP-alpha-D-mannose binding site. Residue D227 coordinates Mg(2+). The tract at residues 254–369 is hexapeptide repeat domain; that stretch reads YTGPGVVGNV…ASVPEPQIIM (116 aa).

The protein belongs to the transferase hexapeptide repeat family. Component of the GMPPA-GMPPB mannose-1-phosphate guanylyltransferase complex composed of 4 Gmppa subunits and 8 Gmppb subunits; the complex is organized into three layers, a central layer made up of 2 Gmppa dimers sandwiched between two layers each made up of 2 Gmppb dimers. Gmppb catalytic activity is reduced when part of the complex and binding of GDP-alpha-D-Mannose by Gmppa induces allosteric feedback inhibition of Gmppb. It depends on Mg(2+) as a cofactor.

The catalysed reaction is alpha-D-mannose 1-phosphate + GTP + H(+) = GDP-alpha-D-mannose + diphosphate. It participates in nucleotide-sugar biosynthesis; GDP-alpha-D-mannose biosynthesis; GDP-alpha-D-mannose from alpha-D-mannose 1-phosphate (GTP route): step 1/1. With respect to regulation, enzyme activity is reduced by incorporation into the GMPPA-GMPPB mannose-1-phosphate guanylyltransferase complex. Allosterically inhibited, when part of the GMPPA-GMPPB complex, by GDP-alpha-D-mannose binding to Gmppa. Functionally, catalytic subunit of the GMPPA-GMPPB mannose-1-phosphate guanylyltransferase complex. Catalyzes the formation of GDP-mannose, an essential precursor of glycan moieties of glycoproteins and glycolipids. Can catalyze the reverse reaction in vitro. Together with GMPPA regulates GDP-alpha-D-mannose levels. This chain is Mannose-1-phosphate guanylyltransferase catalytic subunit beta, found in Drosophila melanogaster (Fruit fly).